The chain runs to 89 residues: Teretoxin Tan22.12 (89 aa).

The signal sequence occupies residues 1-22 (MKVLFTLAMIVVTLCLGQRMRR).

The protein belongs to the teretoxin C (TC) superfamily. Contains 4 disulfide bonds. As to expression, expressed by the venom duct.

It is found in the secreted. The polypeptide is Teretoxin Tan22.12 (Terebra anilis (Auger snail)).